The sequence spans 213 residues: Pyridoxine/pyridoxamine 5'-phosphate oxidase (213 aa).

FMN contacts are provided by residues 60–65 (RMVLMK), 75–76 (YS), K82, and Q104. K65 serves as a coordination point for substrate. Positions 122, 126, and 130 each coordinate substrate. FMN is bound by residues 139–140 (QS) and W184. 190 to 192 (RLH) contacts substrate. Residue R194 coordinates FMN.

It belongs to the pyridoxamine 5'-phosphate oxidase family. In terms of assembly, homodimer. It depends on FMN as a cofactor.

It catalyses the reaction pyridoxamine 5'-phosphate + O2 + H2O = pyridoxal 5'-phosphate + H2O2 + NH4(+). The enzyme catalyses pyridoxine 5'-phosphate + O2 = pyridoxal 5'-phosphate + H2O2. The protein operates within cofactor metabolism; pyridoxal 5'-phosphate salvage; pyridoxal 5'-phosphate from pyridoxamine 5'-phosphate: step 1/1. Its pathway is cofactor metabolism; pyridoxal 5'-phosphate salvage; pyridoxal 5'-phosphate from pyridoxine 5'-phosphate: step 1/1. Catalyzes the oxidation of either pyridoxine 5'-phosphate (PNP) or pyridoxamine 5'-phosphate (PMP) into pyridoxal 5'-phosphate (PLP). In Rhodopseudomonas palustris (strain BisB18), this protein is Pyridoxine/pyridoxamine 5'-phosphate oxidase.